The following is a 125-amino-acid chain: Ribosome-binding factor A (125 aa).

It belongs to the RbfA family. As to quaternary structure, monomer. Binds 30S ribosomal subunits, but not 50S ribosomal subunits or 70S ribosomes.

It localises to the cytoplasm. In terms of biological role, one of several proteins that assist in the late maturation steps of the functional core of the 30S ribosomal subunit. Associates with free 30S ribosomal subunits (but not with 30S subunits that are part of 70S ribosomes or polysomes). Required for efficient processing of 16S rRNA. May interact with the 5'-terminal helix region of 16S rRNA. The chain is Ribosome-binding factor A from Chloroherpeton thalassium (strain ATCC 35110 / GB-78).